Here is a 241-residue protein sequence, read N- to C-terminus: Phycocyanobilin:ferredoxin oxidoreductase (241 aa).

It belongs to the HY2 family.

The enzyme catalyses (2R,3Z)-phycocyanobilin + 4 oxidized [2Fe-2S]-[ferredoxin] = biliverdin IXalpha + 4 reduced [2Fe-2S]-[ferredoxin] + 4 H(+). Catalyzes the four-electron reduction of biliverdin IX-alpha (2-electron reduction at both the A and D rings); the reaction proceeds via an isolatable 2-electron intermediate, 181,182-dihydrobiliverdin. The sequence is that of Phycocyanobilin:ferredoxin oxidoreductase from Prochlorococcus marinus (strain MIT 9312).